The following is an 856-amino-acid chain: MSITASTCGSPSSSESLPNGDLFKELWSKLKECHDKDLQELLMKIGKLKKERCLDAQRLEEFYTKNQHLREQQKTLHDTIKVLEDRLRAGLCDRCTVTEEHMRKKQQEFENIRQQNLKLITELMNDKNALQDENKRLSEQLHDMQKNRHRRKSDEENPADTGDGEDGVIPDSPLSTFSLSMVSRMRRKKENKHVRYTEQTQEDALTFDRKISSGTRPQISTQVNMRKGEDVLVAETLELAPLPNKYEVCTEKPVFNLATVVAETLGLDAMEESQSQSVFNQPGITCAPLFHKSEDSSPRQVKVEFTEGSMEGFQTNDDDTEWNRREASPVFGEPVRNIRRGTDMDCSSPPLPVGLSSKLKSHCSRNAPDFSVHAKAEDGALLTRLSHCIETDSVISQCSSNRQDVLRPSPNKSDAQMGKYIFDSEQHKQTGNRYGKRKNAEAEQEESCESSFDKENNIPLKDISGARHSMLDKPLDLSDRFSVLRPQDRSHESSSRTKLTISLVPEKPDTKTILHIDLKENLHQQTRQKKVFVSGLVEHSAFNLHEDNEVTEEDNKPFHDSETEIMCHVPKRKPRAVHRGVQPTSVLQPNLHMVHACLESQGRPPIDNMQWSIDPGADLSQYEMDMTMEDSKSGSPAKPELEDMDYTYVNESCLLKLKMGDPDDSEAESKDQDSFGEMFDKTEYGEYASYIKDKSPSQSISCKERSDIPSIENKKITSEKEHESKGEPYQKQKAFVEPYFQRPERKKPAIDFPHIEVVRNKEERRKMLGHTCKECELYYADLPEEERAKKLASCSRHRFRYIPPSTPENFWEVGFPSTQTCKDRGYIKEELSPCQRPRRRQPYNAIFTSKIKEQKT.

Positions 25 to 48 are essential for binding to the MRN complex and for RPA focus formation on DNA damage; the sequence is ELWSKLKECHDKDLQELLMKIGKL. Coiled coils occupy residues 38 to 87 and 120 to 141; these read LQEL…EDRL and ITELMNDKNALQDENKRLSEQL. 2 disordered regions span residues 143 to 174 and 423 to 456; these read DMQKNRHRRKSDEENPADTGDGEDGVIPDSPL and DSEQHKQTGNRYGKRKNAEAEQEESCESSFDKEN. The span at 156-168 shows a compositional bias: acidic residues; it reads ENPADTGDGEDGV. The tract at residues 493-515 is damage-recruitment motif; the sequence is SSSRTKLTISLVPEKPDTKTILH. Residues 695 to 732 are disordered; the sequence is SPSQSISCKERSDIPSIENKKITSEKEHESKGEPYQKQ. Residues 702–730 show a composition bias toward basic and acidic residues; the sequence is CKERSDIPSIENKKITSEKEHESKGEPYQ. T806 is subject to Phosphothreonine. T818 carries the phosphothreonine; by ATR modification.

This sequence belongs to the COM1/SAE2/CtIP family. As to quaternary structure, homotetramer; formed by antiparallel association of helical extensions protruding from the N-termini of two parallel coiled-coil dimers. Interacts with the MRN complex; the interaction links DNA sensing to resection. Interacts with samhd1. In terms of processing, phosphorylation at Thr-818 by atr promotes recruitment to double-strand breaks (DSBs).

It localises to the nucleus. Its subcellular location is the chromosome. In terms of biological role, endonuclease that cooperates with the MRE11-RAD50-NBN (MRN) complex in DNA-end resection, the first step of double-strand break (DSB) repair through the homologous recombination (HR) pathway. Functions downstream of the MRN complex and ATM, promotes ATR activation and its recruitment to DSBs in the S/G2 phase facilitating the generation of ssDNA. Specifically promotes the endonuclease activity of the MRN complex to clear DNA ends containing protein adducts: recruited to DSBs by nbn following phosphorylation, and promotes the endonuclease of mre11 to clear protein-DNA adducts and generate clean double-strand break ends. The MRN complex and rbbp8/CtIP are also required for chromosome alignment during metaphase. The polypeptide is DNA endonuclease RBBP8 (rbbp8) (Xenopus laevis (African clawed frog)).